Reading from the N-terminus, the 155-residue chain is MMSTEQMQPLELSEDRLDKLDPRCSHLDDLSDQFIKDCDLKKKPRKGKNVQATLNVESDQKKPRRKDTPALHIPPFIPGVFSEHLIKRYDVQERHPKGKMIPVLHNTDLEQKKPRRKDTPALHMSPFAAGVTLLRDERPKAIVEDDEKDGDKIAI.

Positions Lys41–Ile73 are disordered. Residues Ser58 to Pro69 show a composition bias toward basic and acidic residues. 2 positions are modified to phosphothreonine; by PKG/PRKG1: Thr68 and Thr119.

Post-translationally, substrate for cGMP-dependent protein kinase. Phosphorylated by PRKG1 isoform alpha. Phosphorylation of Thr-68 and Thr-119 is required for its phosphatase activity. In terms of processing, substrate for cGMP-dependent protein kinase. As to expression, highly expressed in cerebellum.

Its function is as follows. Inhibits phosphatase activities of protein phosphatase 1 (PP1) and protein phosphatase 2A (PP2A) complexes. The chain is Protein phosphatase 1 regulatory subunit 17 (PPP1R17) from Homo sapiens (Human).